A 163-amino-acid polypeptide reads, in one-letter code: Inorganic pyrophosphatase (163 aa).

Residue Glu-8 participates in Mg(2+) binding. Lys-16, Arg-30, and Tyr-42 together coordinate substrate. 4 residues coordinate Mg(2+): Asp-52, Asp-57, Asp-84, and Asp-89. Asp-89 acts as the Proton acceptor in catalysis. Tyr-126 contacts substrate.

Belongs to the PPase family. In terms of assembly, homohexamer. It depends on Mg(2+) as a cofactor.

The protein localises to the cytoplasm. It catalyses the reaction diphosphate + H2O = 2 phosphate + H(+). Functionally, catalyzes the hydrolysis of inorganic pyrophosphate (PPi) forming two phosphate ions. In Streptomyces coelicolor (strain ATCC BAA-471 / A3(2) / M145), this protein is Inorganic pyrophosphatase.